The following is a 565-amino-acid chain: E3 ubiquitin-protein ligase RNF168 (565 aa).

The RING-type zinc finger occupies 16–55 (CGICMEILLEPVTLPCNHTLCNPCFQSTVEKANLCCPFCR). S70 is subject to Phosphoserine. The LR motif 1 signature appears at 110 to 128 (LSEPGELRREYEEEISRVE). S134 bears the Phosphoserine mark. The UMI motif signature appears at 143–151 (EEYIQRLLA). Disordered stretches follow at residues 150–223 (LAEE…KTFG) and 252–302 (SKET…PQLC). The segment covering 157 to 179 (EKRQREKRRSEMEEQLRGDEELA) has biased composition (basic and acidic residues). The MIU motif 1 signature appears at 168 to 191 (MEEQLRGDEELARSLSTSINSNYE). Over residues 181 to 201 (SLSTSINSNYERNTLASPLSS) the composition is skewed to polar residues. S197 is subject to Phosphoserine. Residue K210 forms a Glycyl lysine isopeptide (Lys-Gly) (interchain with G-Cter in SUMO2) linkage. Residues 275 to 293 (PTLSPQTCLETQEQGSESS) show a composition bias toward polar residues. 2 positions are modified to phosphoserine: S413 and S414. The MIU motif 2 motif lies at 438–461 (RHKQEEQDRLLALQLQKEVDKEQM). Residues 458 to 521 (KEQMVPNRQK…TKGDYWEPFK (64 aa)) form a disordered region. An LR motif 2 motif is present at residues 465 to 476 (RQKGSPDQYQLR). The segment covering 466 to 477 (QKGSPDQYQLRT) has biased composition (polar residues). S469 carries the post-translational modification Phosphoserine. Residues 504 to 518 (DHSKSPRNTKGDYWE) show a composition bias toward basic and acidic residues. K525 participates in a covalent cross-link: Glycyl lysine isopeptide (Lys-Gly) (interchain with G-Cter in SUMO2).

The protein belongs to the RNF168 family. Monomer. Interacts with UBE2N/UBC13. In terms of processing, sumoylated with SUMO1 by PIAS4 in response to double-strand breaks (DSBs). Ubiquitinated.

Its subcellular location is the nucleus. It catalyses the reaction S-ubiquitinyl-[E2 ubiquitin-conjugating enzyme]-L-cysteine + [acceptor protein]-L-lysine = [E2 ubiquitin-conjugating enzyme]-L-cysteine + N(6)-ubiquitinyl-[acceptor protein]-L-lysine.. The protein operates within protein modification; protein ubiquitination. Its function is as follows. E3 ubiquitin-protein ligase required for accumulation of repair proteins to sites of DNA damage. Acts with UBE2N/UBC13 to amplify the RNF8-dependent histone ubiquitination. Recruited to sites of DNA damage at double-strand breaks (DSBs) by binding to ubiquitinated histone H2A and H2AX and amplifies the RNF8-dependent H2A ubiquitination, promoting the formation of 'Lys-63'-linked ubiquitin conjugates. This leads to concentrate ubiquitinated histones H2A and H2AX at DNA lesions to the threshold required for recruitment of TP53BP1 and BRCA1. Also recruited at DNA interstrand cross-links (ICLs) sites and promotes accumulation of 'Lys-63'-linked ubiquitination of histones H2A and H2AX, leading to recruitment of FAAP20 and Fanconi anemia (FA) complex, followed by interstrand cross-link repair. H2A ubiquitination also mediates the ATM-dependent transcriptional silencing at regions flanking DSBs in cis, a mechanism to avoid collision between transcription and repair intermediates. Also involved in class switch recombination in immune system, via its role in regulation of DSBs repair. Following DNA damage, promotes the ubiquitination and degradation of JMJD2A/KDM4A in collaboration with RNF8, leading to unmask H4K20me2 mark and promote the recruitment of TP53BP1 at DNA damage sites. Not able to initiate 'Lys-63'-linked ubiquitination in vitro; possibly due to partial occlusion of the UBE2N/UBC13-binding region. Catalyzes monoubiquitination of 'Lys-13' and 'Lys-15' of nucleosomal histone H2A (H2AK13Ub and H2AK15Ub, respectively). This chain is E3 ubiquitin-protein ligase RNF168, found in Mus musculus (Mouse).